The following is a 455-amino-acid chain: tRNA modification GTPase MnmE (455 aa).

Arg22 is a (6S)-5-formyl-5,6,7,8-tetrahydrofolate binding site. The interval 43–67 (RRATRAALRSPPSGPGPTGPGPEEG) is disordered. Residues Glu92 and Arg132 each coordinate (6S)-5-formyl-5,6,7,8-tetrahydrofolate. Residues 228 to 381 (GLQVAVVGAP…LEAALESRAR (154 aa)) enclose the TrmE-type G domain. Asn238 contributes to the K(+) binding site. GTP-binding positions include 238–243 (NVGKSS), 257–263 (SDIAGTT), and 282–285 (DTAG). Ser242 provides a ligand contact to Mg(2+). Ser257, Ile259, and Thr262 together coordinate K(+). Residue Thr263 participates in Mg(2+) binding. Lys455 contributes to the (6S)-5-formyl-5,6,7,8-tetrahydrofolate binding site.

It belongs to the TRAFAC class TrmE-Era-EngA-EngB-Septin-like GTPase superfamily. TrmE GTPase family. As to quaternary structure, homodimer. Heterotetramer of two MnmE and two MnmG subunits. Requires K(+) as cofactor.

The protein resides in the cytoplasm. Exhibits a very high intrinsic GTPase hydrolysis rate. Involved in the addition of a carboxymethylaminomethyl (cmnm) group at the wobble position (U34) of certain tRNAs, forming tRNA-cmnm(5)s(2)U34. This Rhodospirillum rubrum (strain ATCC 11170 / ATH 1.1.1 / DSM 467 / LMG 4362 / NCIMB 8255 / S1) protein is tRNA modification GTPase MnmE.